We begin with the raw amino-acid sequence, 695 residues long: Elongation factor G (695 aa).

Positions 4–279 (EKVRNIGISA…AVTQYLPSPL (276 aa)) constitute a tr-type G domain. GTP-binding positions include 13-20 (AHIDSGKT), 79-83 (DTPGH), and 133-136 (NKMD).

It belongs to the TRAFAC class translation factor GTPase superfamily. Classic translation factor GTPase family. EF-G/EF-2 subfamily.

It is found in the cytoplasm. Its function is as follows. Catalyzes the GTP-dependent ribosomal translocation step during translation elongation. During this step, the ribosome changes from the pre-translocational (PRE) to the post-translocational (POST) state as the newly formed A-site-bound peptidyl-tRNA and P-site-bound deacylated tRNA move to the P and E sites, respectively. Catalyzes the coordinated movement of the two tRNA molecules, the mRNA and conformational changes in the ribosome. The protein is Elongation factor G of Rhodopirellula baltica (strain DSM 10527 / NCIMB 13988 / SH1).